The following is a 186-amino-acid chain: Ribosome-recycling factor (186 aa).

Belongs to the RRF family.

It localises to the cytoplasm. Responsible for the release of ribosomes from messenger RNA at the termination of protein biosynthesis. May increase the efficiency of translation by recycling ribosomes from one round of translation to another. In Rickettsia akari (strain Hartford), this protein is Ribosome-recycling factor.